Consider the following 235-residue polypeptide: Elongation factor Tu (235 aa).

The region spanning 1–125 is the tr-type G domain; that stretch reads KNMITGAAQM…EVDEYIPTPE (125 aa). 47 to 50 contributes to the GTP binding site; the sequence is NKED.

It belongs to the TRAFAC class translation factor GTPase superfamily. Classic translation factor GTPase family. EF-Tu/EF-1A subfamily. As to quaternary structure, monomer.

It localises to the cytoplasm. The catalysed reaction is GTP + H2O = GDP + phosphate + H(+). Its function is as follows. GTP hydrolase that promotes the GTP-dependent binding of aminoacyl-tRNA to the A-site of ribosomes during protein biosynthesis. The sequence is that of Elongation factor Tu (tufA) from Gloeothece membranacea (strain PCC 6501 / SAG 26.84).